The chain runs to 464 residues: CRISPR system endoribonuclease Csm6 (464 aa).

Positions 1–190 (MEDLDALWER…LRILPNPHEA (190 aa)) are CARF domain. The tract at residues 191–464 (LAEVDALFAK…LSPEPVPLGF (274 aa)) is HEPN domain.

The protein belongs to the CRISPR-associated Csm6 family. In terms of assembly, homodimer. The protein forms a twisted, head-to-head dimer; the composite ssRNase active site is formed at the dimer interface. Does not require a metal cofactor. serves as cofactor.

Its activity is regulated as follows. Non-specific ssRNase activity is allosterically activated about 1000-fold by cyclic tetraadenylate (cA4), which probably binds to its CARF domain. Its function is as follows. CRISPR (clustered regularly interspaced short palindromic repeat) is an adaptive immune system that provides protection against mobile genetic elements (viruses, transposable elements and conjugative plasmids). CRISPR clusters contain spacers, sequences complementary to antecedent mobile elements, and target invading nucleic acids. CRISPR clusters are transcribed and processed into CRISPR RNA (crRNA). The type III-A Csm effector complex binds crRNA and acts as a crRNA-guided RNase, DNase and cyclic oligoadenylate synthase; binding of target RNA cognate to the crRNA is required for all activities. This protein is not part of the Csm effector complex. A single-strand-specific endoribonuclease (ssRNase) producing free 5'-OH. Activity is approximately 1000-fold stimulated by cyclic oligoadenylate (cOA); only cyclic tetraadenylate (cA4) stimulates the ssRNase activity while linear oligoadenylates do not activate the RNase. Another study showed stimulation by linear tetraadenylate at very high concentrations, but did not examine stimulation by cA4. This is CRISPR system endoribonuclease Csm6 from Thermus thermophilus (strain ATCC 27634 / DSM 579 / HB8).